A 362-amino-acid polypeptide reads, in one-letter code: ATP synthase F(1) complex catalytic subunit beta, mitochondrial (362 aa).

Position 14 is an N6-acetyllysine; alternate (K14). Residue K14 is modified to N6-succinyllysine; alternate. Position 51 is an N6-acetyllysine (K51). 6 residues coordinate ADP: V62, V63, G64, K65, T66, and V67. Residue V62 participates in ATP binding. Positions 62, 63, 64, 65, and 66 each coordinate phosphate. Residues G64, K65, T66, and V67 each contribute to the ATP site. Residue T66 participates in Mg(2+) binding. E91 lines the Mg(2+) pocket. N6-acetyllysine; alternate occurs at positions 112 and 117. 2 positions are modified to N6-succinyllysine; alternate: K112 and K117. T165 carries the phosphothreonine modification. K279 is modified (N6-acetyllysine). Residue S286 is modified to Phosphoserine. N6-acetyllysine occurs at positions 333 and 338.

This sequence belongs to the ATPase alpha/beta chains family. In terms of assembly, homotrimer. Component of the ATP synthase complex composed at least of ATP5F1A/subunit alpha, ATP5F1B/subunit beta, ATP5MC1/subunit c (homooctomer), MT-ATP6/subunit a, MT-ATP8/subunit 8, ATP5ME/subunit e, ATP5MF/subunit f, ATP5MG/subunit g, ATP5MK/subunit k, ATP5MJ/subunit j, ATP5F1C/subunit gamma, ATP5F1D/subunit delta, ATP5F1E/subunit epsilon, ATP5PF/subunit F6, ATP5PB/subunit b, ATP5PD/subunit d, ATP5PO/subunit OSCP. ATP synthase complex consists of a soluble F(1) head domain (subunits alpha(3) and beta(3)) - the catalytic core - and a membrane F(0) domain - the membrane proton channel (subunits c, a, 8, e, f, g, k and j). These two domains are linked by a central stalk (subunits gamma, delta, and epsilon) rotating inside the F1 region and a stationary peripheral stalk (subunits F6, b, d, and OSCP). Interacts with PPIF. Interacts with BCL2L1 isoform BCL-X(L); the interaction mediates the association of BCL2L1 isoform BCL-X(L) with the mitochondrial membrane F(1)F(0) ATP synthase and enhances neurons metabolic efficiency. Interacts with CLN5 and PPT1. Interacts with S100A1; this interaction increases F1-ATPase activity. Interacts with MTLN. Interacts with TTC5/STRAP; the interaction results in decreased mitochondrial ATP production.

It localises to the mitochondrion inner membrane. The enzyme catalyses ATP + H2O + 4 H(+)(in) = ADP + phosphate + 5 H(+)(out). In terms of biological role, catalytic subunit beta, of the mitochondrial membrane ATP synthase complex (F(1)F(0) ATP synthase or Complex V) that produces ATP from ADP in the presence of a proton gradient across the membrane which is generated by electron transport complexes of the respiratory chain. ATP synthase complex consist of a soluble F(1) head domain - the catalytic core - and a membrane F(1) domain - the membrane proton channel. These two domains are linked by a central stalk rotating inside the F(1) region and a stationary peripheral stalk. During catalysis, ATP synthesis in the catalytic domain of F(1) is coupled via a rotary mechanism of the central stalk subunits to proton translocation. In vivo, can only synthesize ATP although its ATP hydrolase activity can be activated artificially in vitro. With the subunit alpha (ATP5F1A), forms the catalytic core in the F(1) domain. In Mesocricetus auratus (Golden hamster), this protein is ATP synthase F(1) complex catalytic subunit beta, mitochondrial.